A 445-amino-acid polypeptide reads, in one-letter code: Tubulin beta-7 chain (445 aa).

GTP contacts are provided by Gln11, Glu69, Ser138, Gly142, Thr143, Gly144, Asn204, and Asn226. Position 69 (Glu69) interacts with Mg(2+). The interval 421–445 is disordered; the sequence is EYQQYQDATAEDEEYEEEEEEEEET. Acidic residues predominate over residues 429-445; that stretch reads TAEDEEYEEEEEEEEET.

This sequence belongs to the tubulin family. In terms of assembly, dimer of alpha and beta chains. A typical microtubule is a hollow water-filled tube with an outer diameter of 25 nm and an inner diameter of 15 nM. Alpha-beta heterodimers associate head-to-tail to form protofilaments running lengthwise along the microtubule wall with the beta-tubulin subunit facing the microtubule plus end conferring a structural polarity. Microtubules usually have 13 protofilaments but different protofilament numbers can be found in some organisms and specialized cells. Requires Mg(2+) as cofactor.

The protein resides in the cytoplasm. It is found in the cytoskeleton. Tubulin is the major constituent of microtubules, a cylinder consisting of laterally associated linear protofilaments composed of alpha- and beta-tubulin heterodimers. Microtubules grow by the addition of GTP-tubulin dimers to the microtubule end, where a stabilizing cap forms. Below the cap, tubulin dimers are in GDP-bound state, owing to GTPase activity of alpha-tubulin. The polypeptide is Tubulin beta-7 chain (TUBB7) (Zea mays (Maize)).